The following is a 402-amino-acid chain: Elongation factor Tu (402 aa).

The tr-type G domain occupies 10 to 212 (KPHVNIGTIG…AVDEYIPTPE (203 aa)). The tract at residues 19–26 (GHVDHGKT) is G1. 19-26 (GHVDHGKT) is a GTP binding site. Mg(2+) is bound at residue T26. The interval 60–64 (GITIA) is G2. The interval 81–84 (DCPG) is G3. GTP is bound by residues 81 to 85 (DCPGH) and 136 to 139 (NKED). The tract at residues 136-139 (NKED) is G4. The segment at 177–179 (SAF) is G5.

Belongs to the TRAFAC class translation factor GTPase superfamily. Classic translation factor GTPase family. EF-Tu/EF-1A subfamily. In terms of assembly, monomer.

The protein resides in the cytoplasm. The enzyme catalyses GTP + H2O = GDP + phosphate + H(+). In terms of biological role, GTP hydrolase that promotes the GTP-dependent binding of aminoacyl-tRNA to the A-site of ribosomes during protein biosynthesis. The protein is Elongation factor Tu of Aliarcobacter butzleri (strain RM4018) (Arcobacter butzleri).